A 204-amino-acid polypeptide reads, in one-letter code: Small ribosomal subunit protein uS4 (204 aa).

The 64-residue stretch at 93–156 (SRLSSVLYHS…AKIPILIEAE (64 aa)) folds into the S4 RNA-binding domain.

This sequence belongs to the universal ribosomal protein uS4 family. As to quaternary structure, part of the 30S ribosomal subunit. Contacts protein S5. The interaction surface between S4 and S5 is involved in control of translational fidelity.

Its function is as follows. One of the primary rRNA binding proteins, it binds directly to 16S rRNA where it nucleates assembly of the body of the 30S subunit. With S5 and S12 plays an important role in translational accuracy. The polypeptide is Small ribosomal subunit protein uS4 (Wolbachia pipientis subsp. Culex pipiens (strain wPip)).